We begin with the raw amino-acid sequence, 541 residues long: Carotenoid 9,10(9',10')-cleavage dioxygenase 1 (541 aa).

Fe cation is bound by residues H222, H270, H336, and H526.

Belongs to the carotenoid oxygenase family. Fe(2+) serves as cofactor.

It catalyses the reaction all-trans-zeaxanthin + 2 O2 = 4,9-dimethyldodeca-2,4,6,8,10-pentaenedial + 2 (3R)-hydroxy-beta-ionone. Functionally, cleaves a variety of carotenoids at the 9-10 and 9'-10' double bonds. Probably not involved in abscisic acid biosynthesis. The polypeptide is Carotenoid 9,10(9',10')-cleavage dioxygenase 1 (CCD1) (Pisum sativum (Garden pea)).